Here is a 2979-residue protein sequence, read N- to C-terminus: Polyketide synthase-nonribosomal peptide synthetase TwmB (2979 aa).

The region spanning 5 to 435 is the Ketosynthase family 3 (KS3) domain; sequence GAEIAIIGSG…GTNAHAILES (431 aa). Catalysis depends on for beta-ketoacyl synthase activity residues C176, H315, and H355. A malonyl-CoA:ACP transacylase (MAT) domain region spans residues 549-864; it reads VFTGQGAQWA…PYTGLFTRGV (316 aa). S643 functions as the For malonyltransferase activity in the catalytic mechanism. The segment at 936-1070 is N-terminal hotdog fold; it reads HDLLGHLTPN…GRVRIHLGEA (135 aa). Residues 936–1234 are dehydratase (DH) domain; sequence HDLLGHLTPN…ECVPFSRQTA (299 aa). The PKS/mFAS DH domain maps to 936 to 1235; the sequence is HDLLGHLTPN…CVPFSRQTAK (300 aa). The Proton acceptor; for dehydratase activity role is filled by H968. Residues 1085 to 1235 are C-terminal hotdog fold; sequence LVSVSEKKFY…CVPFSRQTAK (151 aa). D1141 functions as the Proton donor; for dehydratase activity in the catalytic mechanism. Residues 1387–1572 form an inactive methyltransferase (MT) domain region; the sequence is NFTAHLAGIL…GIDTSTVEQP (186 aa). The tract at residues 2098–2271 is ketoreductase (KR)domain; sequence TYWLVGLTGG…AASVMDIGAV (174 aa). Residues 2380–2465 enclose the Carrier domain; the sequence is RNNEEAYGIV…ELVDTATEAI (86 aa). At S2425 the chain carries O-(pantetheine 4'-phosphoryl)serine. Residues 2476–2497 are disordered; it reads YPAEQTSSQNSDSGQDMASSFD. Residues 2479 to 2497 show a composition bias toward polar residues; that stretch reads EQTSSQNSDSGQDMASSFD. A condensation region spans residues 2534–2970; sequence KSIPVSFTQA…MTLGQAALAE (437 aa).

In terms of assembly, interacts with TwmE. The cofactor is pantetheine 4'-phosphate.

It catalyses the reaction 5-aminopentanoate + 7 malonyl-CoA + acetyl-CoA + 11 NADPH + 17 H(+) = wortmanamide A + 7 CO2 + 11 NADP(+) + 8 CoA + 6 H2O. The enzyme catalyses 5-aminopentanoate + 8 malonyl-CoA + acetyl-CoA + 13 NADPH + 20 H(+) = wortmanamide B + 8 CO2 + 13 NADP(+) + 9 CoA + 7 H2O. The protein operates within secondary metabolite biosynthesis. Its function is as follows. Polyketide synthase-nonribosomal peptide synthetase; part of the gene cluster that mediates the biosynthesis of wortmanamides A and B, reduced long-chain polyketides amidated with a specific omega-amino acid, 5-aminopentanoic acid (5PA). The PKS modules of TwmB are involved in the synthesis of the polyketide backbone, whereas the non-canonical C domain of TwmB is a bonafide condensation domain that specifically selects 5PA and catalyzes amidation to release polyketide chain. The C domain clearly prefers C16 and C18 fatty acyl substrates, which is consistent with simultaneous formation of both octaketide and nonaketide acyl amides wortmanamides A and B. Because TwmB lacks a designated enoylreductase (ER) domain, the required activity is provided the enoyl reductase TwmE. The roles of the remaining enzymes have still to be clarified. In Talaromyces wortmannii (Penicillium wortmannii), this protein is Polyketide synthase-nonribosomal peptide synthetase TwmB.